Here is a 360-residue protein sequence, read N- to C-terminus: MGRSPCCDQDKGVKKGPWLPEEDDKLTAYINENGYGNWRSLPKLAGLNRCGKSCRLRWMNYLRPDIRRGKFSDGEESTIVRLHALLGNKWSKIAGHLPGRTDNEIKNYWNTHMRKKLLQMGIDPVTHEPRTNDLSPILDVSQMLAAAINNGQFGNNNLLNNNTALEDILKLQLIHKMLQIITPKAIPNISSFKTNLLNPKPEPVVNSFNTNSVNPKPDPPAGLFINQSGITPEAASDFIPSYENVWDGFEDNQLPGLVTVSQESLNTAKPGTSTTTKVNDHIRTGMMPCYYGDQLLETPSTGSVSVSPETTSLNHPSTAQHSSGSDFLEDWEKFLDDETSDSCWKSFLDLTSPTSSPVPW.

HTH myb-type domains lie at 10–62 and 63–117; these read DKGV…MNYL and RPDI…RKKL. 2 consecutive DNA-binding regions (H-T-H motif) follow at residues 38 to 62 and 90 to 113; these read WRSLPKLAGLNRCGKSCRLRWMNYL and WSKIAGHLPGRTDNEIKNYWNTHM. The interval 299 to 324 is disordered; the sequence is PSTGSVSVSPETTSLNHPSTAQHSSG.

Its subcellular location is the nucleus. This is Transcription factor MYB39 (MYB39) from Arabidopsis thaliana (Mouse-ear cress).